The following is a 251-amino-acid chain: Probable-ribose 5-phosphate isomerase (251 aa).

This sequence belongs to the ribose 5-phosphate isomerase family.

The enzyme catalyses aldehydo-D-ribose 5-phosphate = D-ribulose 5-phosphate. It participates in carbohydrate degradation; pentose phosphate pathway; D-ribose 5-phosphate from D-ribulose 5-phosphate (non-oxidative stage): step 1/1. In Caenorhabditis elegans, this protein is Probable-ribose 5-phosphate isomerase (rpia-1).